The chain runs to 82 residues: Delta-conotoxin-like CnVIA (82 aa).

The signal sequence occupies residues 1-22 (MKLTCMMIVAVLFLTAWTFVTA). Residues 23-49 (DDSRNGLENLSPKARHEMKNPEASKSN) constitute a propeptide that is removed on maturation. 3 disulfide bridges follow: C54–C69, C61–C73, and C68–C78.

It belongs to the conotoxin O1 superfamily. Expressed by the venom duct.

It localises to the secreted. Functionally, delta-conotoxins bind to site 6 of voltage-gated sodium channels (Nav) and inhibit the inactivation process. The chain is Delta-conotoxin-like CnVIA from Conus consors (Singed cone).